The chain runs to 783 residues: Centrosomal protein of 89 kDa (783 aa).

The disordered stretch occupies residues 28-49 (PKAAVPRTPPPRSPNPSPERPR). Residues 34–45 (RTPPPRSPNPSP) show a composition bias toward pro residues. Serine 50 carries the phosphoserine modification. Disordered stretches follow at residues 63 to 157 (GRTV…DDLY) and 176 to 226 (DENI…DITG). Positions 94–107 (ATTSQLRPRPNWQS) are enriched in polar residues. 2 stretches are compositionally biased toward basic and acidic residues: residues 139-155 (ELGD…HSDD) and 196-214 (QQKD…KPPL). Coiled coils occupy residues 234–333 (EITR…SRYQ) and 369–719 (LLLA…GELE).

It is found in the cytoplasm. The protein resides in the cytosol. The protein localises to the cytoskeleton. Its subcellular location is the microtubule organizing center. It localises to the centrosome. It is found in the spindle pole. The protein resides in the centriole. The protein localises to the mitochondrion intermembrane space. Required for ciliogenesis. Also plays a role in mitochondrial metabolism where it may modulate complex IV activity. In Homo sapiens (Human), this protein is Centrosomal protein of 89 kDa (CEP89).